Reading from the N-terminus, the 335-residue chain is Methionine import ATP-binding protein MetN (335 aa).

The ABC transporter domain occupies 2–241; it reads IQFKDSYKHY…PQHPTTRSFV (240 aa). An ATP-binding site is contributed by 38–45; the sequence is GHSGAGKS.

It belongs to the ABC transporter superfamily. Methionine importer (TC 3.A.1.24) family. In terms of assembly, the complex is composed of two ATP-binding proteins (MetN), two transmembrane proteins (MetI) and a solute-binding protein (MetQ).

It localises to the cell inner membrane. It carries out the reaction L-methionine(out) + ATP + H2O = L-methionine(in) + ADP + phosphate + H(+). The enzyme catalyses D-methionine(out) + ATP + H2O = D-methionine(in) + ADP + phosphate + H(+). Functionally, part of the ABC transporter complex MetNIQ involved in methionine import. Responsible for energy coupling to the transport system. The chain is Methionine import ATP-binding protein MetN from Xylella fastidiosa (strain Temecula1 / ATCC 700964).